The primary structure comprises 410 residues: Inositol hexakisphosphate kinase 3 (410 aa).

A substrate-binding site is contributed by 211 to 219 (PCVLDLKMG). The disordered stretch occupies residues 333–358 (QEPPERAPGSPHPHEAPQAAHGSSPG).

Belongs to the inositol phosphokinase (IPK) family. Detected in brain.

It localises to the cytoplasm. It carries out the reaction 1D-myo-inositol hexakisphosphate + ATP = 5-diphospho-1D-myo-inositol 1,2,3,4,6-pentakisphosphate + ADP. The enzyme catalyses 1-diphospho-1D-myo-inositol 2,3,4,5,6-pentakisphosphate + ATP + H(+) = 1,5-bis(diphospho)-1D-myo-inositol 2,3,4,6-tetrakisphosphate + ADP. Converts inositol hexakisphosphate (InsP6) to diphosphoinositol pentakisphosphate (InsP7/PP-InsP5). Converts 1,3,4,5,6-pentakisphosphate (InsP5) to PP-InsP4. This is Inositol hexakisphosphate kinase 3 (IP6K3) from Homo sapiens (Human).